A 187-amino-acid polypeptide reads, in one-letter code: Oligoribonuclease (187 aa).

Positions 7 to 170 (LIWIDLEMTG…DDIKDSINEL (164 aa)) constitute an Exonuclease domain. Residue Tyr128 is part of the active site.

The protein belongs to the oligoribonuclease family.

The protein localises to the cytoplasm. 3'-to-5' exoribonuclease specific for small oligoribonucleotides. The polypeptide is Oligoribonuclease (Legionella pneumophila (strain Paris)).